Here is a 356-residue protein sequence, read N- to C-terminus: Glutamine synthetase nodule isozyme (356 aa).

Residues 19 to 99 (IIAEYIWIGG…VMCDAYTPAG (81 aa)) enclose the GS beta-grasp domain. The tract at residues 41–66 (PGPVSDPSKLPKWNYDGSSTGQAPGE) is disordered. In terms of domain architecture, GS catalytic spans 106–356 (KRHNAAKIFS…IADTTILWKP (251 aa)).

This sequence belongs to the glutamine synthetase family. As to quaternary structure, homooctamer.

It is found in the cytoplasm. It catalyses the reaction L-glutamate + NH4(+) + ATP = L-glutamine + ADP + phosphate + H(+). This chain is Glutamine synthetase nodule isozyme, found in Vigna aconitifolia (Moth bean).